Consider the following 483-residue polypeptide: Dihydrolipoyllysine-residue acetyltransferase component of pyruvate dehydrogenase complex, mitochondrial (483 aa).

Residues 1–28 (MLSANMLRRMHHGVAVTRMLLVSNGKVQ) constitute a mitochondrion transit peptide. Residues 53–129 (HTVINMPALS…PVGKPLAVTV (77 aa)) enclose the Lipoyl-binding domain. At Lys-94 the chain carries N6-lipoyllysine. Disordered stretches follow at residues 143 to 187 (IEDS…DRVF) and 234 to 254 (EAAAKATTPAASAADAAAPGD). A compositionally biased stretch (basic and acidic residues) spans 146–160 (SSAKEPSAKSGEEKS). The span at 161 to 178 (APSSEKQSKETSSPSNVS) shows a compositional bias: polar residues. The Peripheral subunit-binding (PSBD) domain maps to 187–224 (FASPLARKLAEEKDLDLSQIRGSGPNGRIIKVDIENFK). The segment covering 235 to 252 (AAAKATTPAASAADAAAP) has biased composition (low complexity). Active-site residues include His-456 and Asp-460.

This sequence belongs to the 2-oxoacid dehydrogenase family. It depends on (R)-lipoate as a cofactor.

The protein resides in the mitochondrion matrix. It catalyses the reaction N(6)-[(R)-dihydrolipoyl]-L-lysyl-[protein] + acetyl-CoA = N(6)-[(R)-S(8)-acetyldihydrolipoyl]-L-lysyl-[protein] + CoA. The pyruvate dehydrogenase complex catalyzes the overall conversion of pyruvate to acetyl-CoA and CO(2). It contains multiple copies of three enzymatic components: pyruvate dehydrogenase (E1), dihydrolipoamide acetyltransferase (E2) and lipoamide dehydrogenase (E3). The protein is Dihydrolipoyllysine-residue acetyltransferase component of pyruvate dehydrogenase complex, mitochondrial of Schizosaccharomyces pombe (strain 972 / ATCC 24843) (Fission yeast).